The following is a 454-amino-acid chain: tRNA modification GTPase MnmE (454 aa).

The (6S)-5-formyl-5,6,7,8-tetrahydrofolate site is built by Arg26, Glu84, and Lys123. The TrmE-type G domain occupies 219–378; sequence GLQVVIAGKP…LVDAITAHAG (160 aa). Asn229 contacts K(+). Residues 229-234, 248-254, and 273-276 each bind GTP; these read NAGKSS, TDIAGTT, and DTAG. Ser233 is a Mg(2+) binding site. K(+) is bound by residues Thr248, Ile250, and Thr253. Thr254 contacts Mg(2+). Lys454 is a (6S)-5-formyl-5,6,7,8-tetrahydrofolate binding site.

The protein belongs to the TRAFAC class TrmE-Era-EngA-EngB-Septin-like GTPase superfamily. TrmE GTPase family. In terms of assembly, homodimer. Heterotetramer of two MnmE and two MnmG subunits. The cofactor is K(+).

It localises to the cytoplasm. Exhibits a very high intrinsic GTPase hydrolysis rate. Involved in the addition of a carboxymethylaminomethyl (cmnm) group at the wobble position (U34) of certain tRNAs, forming tRNA-cmnm(5)s(2)U34. The chain is tRNA modification GTPase MnmE from Acinetobacter baumannii (strain ATCC 17978 / DSM 105126 / CIP 53.77 / LMG 1025 / NCDC KC755 / 5377).